Consider the following 421-residue polypeptide: Periplasmic [Fe] hydrogenase large subunit (421 aa).

2 4Fe-4S ferredoxin-type domains span residues 26 to 57 and 59 to 86; these read HFVQ…MGEP and SIPH…EAQS. [4Fe-4S] cluster is bound by residues Cys35, Cys38, Cys41, Cys45, Cys66, Cys69, Cys72, Cys76, Cys179, Cys234, Cys378, and Cys382. Cys382 contributes to the Fe(2+) binding site.

As to quaternary structure, heterodimer of a large and a small subunit. Requires [4Fe-4S] cluster as cofactor. Fe(2+) serves as cofactor.

It is found in the periplasm. The enzyme catalyses H2 + 2 oxidized [2Fe-2S]-[ferredoxin] = 2 reduced [2Fe-2S]-[ferredoxin] + 2 H(+). In terms of biological role, may be involved in hydrogen uptake for the reduction of sulfate to hydrogen sulfide in an electron transport chain. Cytochrome c3 is likely to be the physiological electron carrier for the enzyme. In Nitratidesulfovibrio vulgaris (strain ATCC 29579 / DSM 644 / CCUG 34227 / NCIMB 8303 / VKM B-1760 / Hildenborough) (Desulfovibrio vulgaris), this protein is Periplasmic [Fe] hydrogenase large subunit (hydA).